Here is a 214-residue protein sequence, read N- to C-terminus: Ribonuclease HII (214 aa).

An RNase H type-2 domain is found at 26 to 214 (EIVCGVDEAG…PVREAFDLIR (189 aa)). Asp32, Glu33, and Asp124 together coordinate a divalent metal cation.

It belongs to the RNase HII family. Mn(2+) is required as a cofactor. Requires Mg(2+) as cofactor.

It localises to the cytoplasm. It carries out the reaction Endonucleolytic cleavage to 5'-phosphomonoester.. Functionally, endonuclease that specifically degrades the RNA of RNA-DNA hybrids. The chain is Ribonuclease HII from Burkholderia mallei (strain NCTC 10247).